Reading from the N-terminus, the 241-residue chain is ATP synthase subunit a (241 aa).

Helical transmembrane passes span 30 to 50, 89 to 109, 128 to 148, 193 to 213, and 214 to 234; these read GQVF…VLVG, LPFI…GALI, INTT…AGLS, LAVG…VMLL, and GLFT…FYIG.

Belongs to the ATPase A chain family. F-type ATPases have 2 components, CF(1) - the catalytic core - and CF(0) - the membrane proton channel. CF(1) has five subunits: alpha(3), beta(3), gamma(1), delta(1), epsilon(1). CF(0) has four main subunits: a, b, b' and c.

The protein localises to the cellular thylakoid membrane. Its function is as follows. Key component of the proton channel; it plays a direct role in the translocation of protons across the membrane. In Synechococcus sp. (strain CC9605), this protein is ATP synthase subunit a.